The chain runs to 329 residues: 4-hydroxythreonine-4-phosphate dehydrogenase (329 aa).

Substrate contacts are provided by His136 and Thr137. His166, His211, and His266 together coordinate a divalent metal cation. 3 residues coordinate substrate: Lys274, Asn283, and Arg292.

Belongs to the PdxA family. As to quaternary structure, homodimer. The cofactor is Zn(2+). Mg(2+) is required as a cofactor. It depends on Co(2+) as a cofactor.

The protein resides in the cytoplasm. It carries out the reaction 4-(phosphooxy)-L-threonine + NAD(+) = 3-amino-2-oxopropyl phosphate + CO2 + NADH. Its pathway is cofactor biosynthesis; pyridoxine 5'-phosphate biosynthesis; pyridoxine 5'-phosphate from D-erythrose 4-phosphate: step 4/5. Catalyzes the NAD(P)-dependent oxidation of 4-(phosphooxy)-L-threonine (HTP) into 2-amino-3-oxo-4-(phosphooxy)butyric acid which spontaneously decarboxylates to form 3-amino-2-oxopropyl phosphate (AHAP). The sequence is that of 4-hydroxythreonine-4-phosphate dehydrogenase from Pseudomonas syringae pv. tomato (strain ATCC BAA-871 / DC3000).